Reading from the N-terminus, the 255-residue chain is Indole-3-glycerol phosphate synthase (255 aa).

It belongs to the TrpC family.

The enzyme catalyses 1-(2-carboxyphenylamino)-1-deoxy-D-ribulose 5-phosphate + H(+) = (1S,2R)-1-C-(indol-3-yl)glycerol 3-phosphate + CO2 + H2O. The protein operates within amino-acid biosynthesis; L-tryptophan biosynthesis; L-tryptophan from chorismate: step 4/5. The chain is Indole-3-glycerol phosphate synthase from Streptococcus gordonii (strain Challis / ATCC 35105 / BCRC 15272 / CH1 / DL1 / V288).